Consider the following 376-residue polypeptide: MTYTTFSKNKNNQLYEPMFFGQSVNISRYDQQKYEIFEKLIEKQLSFFWRPEEVDLSRDYIDFQNLPQHEKHIFVSNLKYQTLLDSIQGRSPNIALLPIVSLPELETWIETWSFSETIHSRSYTHIIRNIINTPSLIFDDIIDNKNIANRAKDIAKYYDDLIELTSYWHLFGEGKHTINGKKIKIDLHELKKKLYLCLISVNALEAIRFYVSFACSFAFAEREKMEGNAKIIRLIARDEALHLTSTQHILNILHNDKNNEGMSDISKECYEECYHLFIRVSDQEKIWAKYLFQNGSMLGLNQEILSQYIEYITNIRMKAIGLPSPFKILSNPIPWINSWLISDNVQVAPQEISVSSYLIGQINSEINDSDFEKFKL.

The Fe cation site is built by D85, E116, and H119. The active site involves Y123. Fe cation is bound by residues E205, E239, and H242.

The protein belongs to the ribonucleoside diphosphate reductase small chain family. In terms of assembly, tetramer of two alpha and two beta subunits. Fe cation is required as a cofactor.

The catalysed reaction is a 2'-deoxyribonucleoside 5'-diphosphate + [thioredoxin]-disulfide + H2O = a ribonucleoside 5'-diphosphate + [thioredoxin]-dithiol. In terms of biological role, provides the precursors necessary for DNA synthesis. Catalyzes the biosynthesis of deoxyribonucleotides from the corresponding ribonucleotides. The sequence is that of Ribonucleoside-diphosphate reductase subunit beta (nrdB) from Buchnera aphidicola subsp. Baizongia pistaciae (strain Bp).